The chain runs to 152 residues: UPF0266 membrane protein YobD (152 aa).

3 consecutive transmembrane segments (helical) span residues 6–26, 45–65, and 67–87; these read LVLI…QFIM, VDSV…VTSH, and AQMT…IFWI.

This sequence belongs to the UPF0266 family.

The protein localises to the cell inner membrane. In Salmonella paratyphi B (strain ATCC BAA-1250 / SPB7), this protein is UPF0266 membrane protein YobD.